The chain runs to 158 residues: MKVTIYTDGAARGNPDGPGGYGTILSYIDSTGVEHIREYSGGYKKTTNNRMELMAAIVGLEALTKPCVVTLYSDSQYVVKAFNEHWLDGWIKKGWKRGKNEPVKNVDLWKRLLAAKNQHDVTFCWVKGHDGHPQNERCDVLATTAADGGNLADDNVVE.

The region spanning 1–147 (MKVTIYTDGA…CDVLATTAAD (147 aa)) is the RNase H type-1 domain. Residues Asp-8, Glu-52, Asp-74, and Asp-139 each coordinate Mg(2+).

Belongs to the RNase H family. Monomer. The cofactor is Mg(2+).

The protein localises to the cytoplasm. It carries out the reaction Endonucleolytic cleavage to 5'-phosphomonoester.. Its function is as follows. Endonuclease that specifically degrades the RNA of RNA-DNA hybrids. This is Ribonuclease H from Lachnoclostridium phytofermentans (strain ATCC 700394 / DSM 18823 / ISDg) (Clostridium phytofermentans).